A 456-amino-acid polypeptide reads, in one-letter code: tRNA modification GTPase MnmE (456 aa).

Residues R21, E85, and K124 each coordinate (6S)-5-formyl-5,6,7,8-tetrahydrofolate. Residues 220-379 enclose the TrmE-type G domain; that stretch reads QLRIVLYGEP…LLDEIQKKAA (160 aa). K(+) is bound at residue N230. Residues 230-235, 249-255, and 274-277 each bind GTP; these read NTGKSS, SEIPGTT, and DTAG. S234 serves as a coordination point for Mg(2+). S249, I251, and T254 together coordinate K(+). T255 is a Mg(2+) binding site. A (6S)-5-formyl-5,6,7,8-tetrahydrofolate-binding site is contributed by K456.

The protein belongs to the TRAFAC class TrmE-Era-EngA-EngB-Septin-like GTPase superfamily. TrmE GTPase family. As to quaternary structure, homodimer. Heterotetramer of two MnmE and two MnmG subunits. K(+) serves as cofactor.

The protein resides in the cytoplasm. Functionally, exhibits a very high intrinsic GTPase hydrolysis rate. Involved in the addition of a carboxymethylaminomethyl (cmnm) group at the wobble position (U34) of certain tRNAs, forming tRNA-cmnm(5)s(2)U34. This Leptospira borgpetersenii serovar Hardjo-bovis (strain JB197) protein is tRNA modification GTPase MnmE.